The sequence spans 303 residues: Aspartate carbamoyltransferase catalytic subunit (303 aa).

Positions 49 and 50 each coordinate carbamoyl phosphate. Lys77 provides a ligand contact to L-aspartate. Carbamoyl phosphate-binding residues include Arg99, His126, and Gln129. The L-aspartate site is built by Arg159 and Arg211. 2 residues coordinate carbamoyl phosphate: Ser252 and Pro253.

It belongs to the aspartate/ornithine carbamoyltransferase superfamily. ATCase family. As to quaternary structure, heterododecamer (2C3:3R2) of six catalytic PyrB chains organized as two trimers (C3), and six regulatory PyrI chains organized as three dimers (R2).

It carries out the reaction carbamoyl phosphate + L-aspartate = N-carbamoyl-L-aspartate + phosphate + H(+). Its pathway is pyrimidine metabolism; UMP biosynthesis via de novo pathway; (S)-dihydroorotate from bicarbonate: step 2/3. Catalyzes the condensation of carbamoyl phosphate and aspartate to form carbamoyl aspartate and inorganic phosphate, the committed step in the de novo pyrimidine nucleotide biosynthesis pathway. This is Aspartate carbamoyltransferase catalytic subunit from Listeria innocua serovar 6a (strain ATCC BAA-680 / CLIP 11262).